The following is an 881-amino-acid chain: Putative outer membrane usher protein YfcU (881 aa).

Positions 1–29 (MPDHSLFRLRILPWCIALAMSGSYSSVWA) are cleaved as a signal peptide.

Belongs to the fimbrial export usher family.

It localises to the cell outer membrane. Part of the yfcOPQRSUV fimbrial operon. Could contribute to adhesion to various surfaces in specific environmental niches. Increases adhesion to eukaryotic T24 bladder epithelial cells in the absence of fim genes. Probably involved in the export and assembly of fimbrial subunits across the outer membrane. The chain is Putative outer membrane usher protein YfcU (yfcU) from Escherichia coli (strain K12).